Here is a 411-residue protein sequence, read N- to C-terminus: Pyridinium-3,5-bisthiocarboxylic acid mononucleotide nickel insertion protein (411 aa).

The protein belongs to the LarC family.

It catalyses the reaction Ni(II)-pyridinium-3,5-bisthiocarboxylate mononucleotide = pyridinium-3,5-bisthiocarboxylate mononucleotide + Ni(2+). Involved in the biosynthesis of a nickel-pincer cofactor ((SCS)Ni(II) pincer complex). Binds Ni(2+), and functions in nickel delivery to pyridinium-3,5-bisthiocarboxylic acid mononucleotide (P2TMN), to form the mature cofactor. Is thus probably required for the activation of nickel-pincer cofactor-dependent enzymes. In Geobacillus kaustophilus (strain HTA426), this protein is Pyridinium-3,5-bisthiocarboxylic acid mononucleotide nickel insertion protein.